The chain runs to 328 residues: Lipoyl synthase (328 aa).

[4Fe-4S] cluster-binding residues include C57, C62, C68, C83, C87, C90, and S298. A Radical SAM core domain is found at 69–287 (WSRGTATFML…REEGLSLGFL (219 aa)).

This sequence belongs to the radical SAM superfamily. Lipoyl synthase family. Requires [4Fe-4S] cluster as cofactor.

It is found in the cytoplasm. The enzyme catalyses [[Fe-S] cluster scaffold protein carrying a second [4Fe-4S](2+) cluster] + N(6)-octanoyl-L-lysyl-[protein] + 2 oxidized [2Fe-2S]-[ferredoxin] + 2 S-adenosyl-L-methionine + 4 H(+) = [[Fe-S] cluster scaffold protein] + N(6)-[(R)-dihydrolipoyl]-L-lysyl-[protein] + 4 Fe(3+) + 2 hydrogen sulfide + 2 5'-deoxyadenosine + 2 L-methionine + 2 reduced [2Fe-2S]-[ferredoxin]. It functions in the pathway protein modification; protein lipoylation via endogenous pathway; protein N(6)-(lipoyl)lysine from octanoyl-[acyl-carrier-protein]: step 2/2. Its function is as follows. Catalyzes the radical-mediated insertion of two sulfur atoms into the C-6 and C-8 positions of the octanoyl moiety bound to the lipoyl domains of lipoate-dependent enzymes, thereby converting the octanoylated domains into lipoylated derivatives. The chain is Lipoyl synthase from Deinococcus geothermalis (strain DSM 11300 / CIP 105573 / AG-3a).